A 335-amino-acid polypeptide reads, in one-letter code: Pyridoxal 5'-phosphate synthase subunit PdxS (335 aa).

Aspartate 59 is a D-ribose 5-phosphate binding site. Lysine 116 (schiff-base intermediate with D-ribose 5-phosphate) is an active-site residue. Glycine 188 is a binding site for D-ribose 5-phosphate. A D-glyceraldehyde 3-phosphate-binding site is contributed by lysine 200. Residues glycine 253 and 274-275 (GS) each bind D-ribose 5-phosphate.

Belongs to the PdxS/SNZ family. In terms of assembly, in the presence of PdxT, forms a dodecamer of heterodimers.

It carries out the reaction aldehydo-D-ribose 5-phosphate + D-glyceraldehyde 3-phosphate + L-glutamine = pyridoxal 5'-phosphate + L-glutamate + phosphate + 3 H2O + H(+). It functions in the pathway cofactor biosynthesis; pyridoxal 5'-phosphate biosynthesis. Functionally, catalyzes the formation of pyridoxal 5'-phosphate from ribose 5-phosphate (RBP), glyceraldehyde 3-phosphate (G3P) and ammonia. The ammonia is provided by the PdxT subunit. Can also use ribulose 5-phosphate and dihydroxyacetone phosphate as substrates, resulting from enzyme-catalyzed isomerization of RBP and G3P, respectively. The sequence is that of Pyridoxal 5'-phosphate synthase subunit PdxS from Desulfurococcus amylolyticus (strain DSM 18924 / JCM 16383 / VKM B-2413 / 1221n) (Desulfurococcus kamchatkensis).